The sequence spans 116 residues: Putative iron-sulfur cluster insertion protein ErpA (116 aa).

Residues Cys-44, Cys-108, and Cys-110 each contribute to the iron-sulfur cluster site.

Belongs to the HesB/IscA family. Homodimer. Iron-sulfur cluster serves as cofactor.

Functionally, required for insertion of 4Fe-4S clusters. The protein is Putative iron-sulfur cluster insertion protein ErpA of Janthinobacterium sp. (strain Marseille) (Minibacterium massiliensis).